The following is a 682-amino-acid chain: 1,4-alpha-glucan-branching enzyme (682 aa).

Residues Trp88 and Lys124 each contribute to the (1,4-alpha-D-glucosyl)n site. Asp342 (nucleophile) is an active-site residue. Glu397 functions as the Proton donor in the catalytic mechanism.

This sequence belongs to the glycosyl hydrolase 13 family. GlgB subfamily.

The protein localises to the cytoplasm. It catalyses the reaction Transfers a segment of a (1-&gt;4)-alpha-D-glucan chain to a primary hydroxy group in a similar glucan chain.. Its pathway is glycan biosynthesis; glycogen biosynthesis. In terms of biological role, glycogen-branching enzyme participates in the glycogen biosynthetic process along with glycogenin and glycogen synthase. Generates alpha-1,6-glucosidic branches from alpha-1,4-linked glucose chains, to increase solubility of the glycogen polymer. The polypeptide is 1,4-alpha-glucan-branching enzyme (Cryptococcus neoformans var. grubii serotype A (strain H99 / ATCC 208821 / CBS 10515 / FGSC 9487) (Filobasidiella neoformans var. grubii)).